A 107-amino-acid polypeptide reads, in one-letter code: Large ribosomal subunit protein uL24 (107 aa).

It belongs to the universal ribosomal protein uL24 family. As to quaternary structure, part of the 50S ribosomal subunit.

Functionally, one of two assembly initiator proteins, it binds directly to the 5'-end of the 23S rRNA, where it nucleates assembly of the 50S subunit. One of the proteins that surrounds the polypeptide exit tunnel on the outside of the subunit. This Carboxydothermus hydrogenoformans (strain ATCC BAA-161 / DSM 6008 / Z-2901) protein is Large ribosomal subunit protein uL24.